A 523-amino-acid chain; its full sequence is Glycine betaine transporter 1 (523 aa).

12 consecutive transmembrane segments (helical) span residues 33 to 53, 71 to 91, 109 to 129, 165 to 185, 214 to 234, 251 to 271, 286 to 306, 337 to 357, 372 to 392, 420 to 440, 467 to 487, and 496 to 516; these read VFGI…VLDA, FDWL…ALIV, SFMS…LMFW, FHWG…LAFF, IVDI…LGLG, GLGL…VSVV, MVVA…ASLG, WTVF…MFIA, VLIV…GLAI, VLPF…VFFI, VFWA…GGSE, and AIST…SLLM.

Belongs to the BCCT transporter (TC 2.A.15) family.

Its subcellular location is the cell inner membrane. Involved in the uptake of the osmoprotectant glycine betaine. The polypeptide is Glycine betaine transporter 1 (Vibrio parahaemolyticus serotype O3:K6 (strain RIMD 2210633)).